A 338-amino-acid polypeptide reads, in one-letter code: m7GpppX diphosphatase (338 aa).

The tract at residues 1–36 (MADTAPQLKRKREQEAEEAETPSTEEKEAGVGNGTS) is disordered. At Ala2 the chain carries N-acetylalanine. The nuclear localization signal (NLS) signature appears at 9–12 (KRKR). Phosphoserine is present on residues Ser23 and Ser100. 2 positions are modified to N6-acetyllysine: Lys137 and Lys141. The nuclear export sequence (NES) motif lies at 141 to 153 (KYMRQDLRLIRET). Substrate contacts are provided by residues Trp174, Glu184, Asp204, Lys206, and 267-278 (HYLPSYYHLHVH). The short motif at 274 to 278 (HLHVH) is the Histidine triad motif element. Catalysis depends on His276, which acts as the Nucleophile.

This sequence belongs to the HIT family. In terms of assembly, homodimer. Associates with components of the exosome multienzyme ribonuclease complex, such as EXOSC3 and EXOSC4. Interacts with NDOR1.

It is found in the cytoplasm. It localises to the nucleus. It catalyses the reaction a 5'-end (N(7)-methyl 5'-triphosphoguanosine)-ribonucleoside in mRNA + H2O = N(7)-methyl-GMP + a 5'-end diphospho-ribonucleoside in mRNA + 2 H(+). Its activity is regulated as follows. The hydrolytic product 7-methylguanosine diphosphate (m7GDP) efficiently inhibits the decapping scavenger activity and acts as a competitive inhibitor in vitro. Inhibited by 2,4-diaminoquinazoline. In terms of biological role, decapping scavenger enzyme that catalyzes the cleavage of a residual cap structure following the degradation of mRNAs by the 3'-&gt;5' exosome-mediated mRNA decay pathway. Hydrolyzes cap analog structures like 7-methylguanosine nucleoside triphosphate (m7GpppG) with up to 10 nucleotide substrates (small capped oligoribonucleotides) and specifically releases 5'-phosphorylated RNA fragments and 7-methylguanosine monophosphate (m7GMP). Cleaves cap analog structures like tri-methyl guanosine nucleoside triphosphate (m3(2,2,7)GpppG) with very poor efficiency. Does not hydrolyze unmethylated cap analog (GpppG) and shows no decapping activity on intact m7GpppG-capped mRNA molecules longer than 25 nucleotides. Does not hydrolyze 7-methylguanosine diphosphate (m7GDP) to m7GMP. May also play a role in the 5'-&gt;3 mRNA decay pathway; m7GDP, the downstream product released by the 5'-&gt;3' mRNA mediated decapping activity, may be also converted by DCPS to m7GMP. Binds to m7GpppG and strongly to m7GDP. Plays a role in first intron splicing of pre-mRNAs. Inhibits activation-induced cell death. This Mus musculus (Mouse) protein is m7GpppX diphosphatase (Dcps).